Consider the following 145-residue polypeptide: Nickel-responsive regulator (145 aa).

The Ni(2+) site is built by histidine 77, histidine 88, histidine 90, and cysteine 96.

Belongs to the transcriptional regulatory CopG/NikR family. As to quaternary structure, homotetramer. Requires Ni(2+) as cofactor.

Its function is as follows. Transcriptional repressor of the nikABCDE operon. Is active in the presence of excessive concentrations of intracellular nickel. This is Nickel-responsive regulator from Edwardsiella ictaluri (strain 93-146).